Reading from the N-terminus, the 164-residue chain is Putative HTH-type transcriptional regulator ORF2 (164 aa).

Residues 2–131 (RLTTKGRYAV…SGISLADLVA (130 aa)) enclose the HTH rrf2-type domain.

The protein is Putative HTH-type transcriptional regulator ORF2 of Azotobacter vinelandii.